We begin with the raw amino-acid sequence, 212 residues long: Adenylate kinase (212 aa).

Residue 10-15 (GAGKGT) coordinates ATP. The interval 30–59 (STGDMFRAAMANQTEMGVLAKSYIDKGELV) is NMP. AMP contacts are provided by residues threonine 31, arginine 36, 57-59 (ELV), 86-89 (GYPR), and glutamine 93. Positions 127–159 (GRIIHRVTGETFHKVFNPPVDYKEEDYYQREDD) are LID. Residues arginine 128 and 137–138 (TF) each bind ATP. Residues arginine 156 and arginine 167 each contribute to the AMP site. Glutamine 195 serves as a coordination point for ATP.

It belongs to the adenylate kinase family. As to quaternary structure, monomer.

The protein localises to the cytoplasm. The catalysed reaction is AMP + ATP = 2 ADP. Its pathway is purine metabolism; AMP biosynthesis via salvage pathway; AMP from ADP: step 1/1. Catalyzes the reversible transfer of the terminal phosphate group between ATP and AMP. Plays an important role in cellular energy homeostasis and in adenine nucleotide metabolism. This chain is Adenylate kinase, found in Streptococcus pneumoniae serotype 4 (strain ATCC BAA-334 / TIGR4).